A 372-amino-acid polypeptide reads, in one-letter code: Forkhead box protein F1-B (372 aa).

The tract at residues 1-51 (MTAEIQQPPSQPPAQSSPMSAATDKHGGQPSAMESASCATKTKKTNAGIRR) is disordered. The segment covering 13–22 (PAQSSPMSAA) has biased composition (low complexity). The fork-head DNA-binding region spans 54–148 (KPPYSYIALI…EEGSFRRRPR (95 aa)).

At the late gastrula stage, expressed in the presumptive ventrolateral mesoderm. During neurulation and tailbud stages, expressed in the lateral plate mesoderm and in the neural crest-derived structures of the head and branchial arches. During tailbud stages, expressed in the pronephros and pronephros ducts and in cells that migrate from the dorsolateral plate to the ventral region of the embryo (with the notable exception of the heart). These cells may represent hematopoietic or endothelial progenitor cells.

Its subcellular location is the nucleus. Probable transcription factor. Required for smooth muscle (visceral mesoderm) differentiation during gut development. Also required for normal proliferation of the lateral plate mesoderm. Acts as a downstream mediator of bmp4-signaling. This is Forkhead box protein F1-B (foxf1-b) from Xenopus laevis (African clawed frog).